Reading from the N-terminus, the 507-residue chain is Maturase K (507 aa).

This sequence belongs to the intron maturase 2 family. MatK subfamily.

Its subcellular location is the plastid. It is found in the chloroplast. Its function is as follows. Usually encoded in the trnK tRNA gene intron. Probably assists in splicing its own and other chloroplast group II introns. This is Maturase K from Cryptomeria japonica (Japanese cedar).